Consider the following 180-residue polypeptide: ATP synthase subunit b 2 (180 aa).

The helical transmembrane segment at 33-53 (IFWLLVTLVAIYFLLTRVALP) threads the bilayer.

It belongs to the ATPase B chain family. F-type ATPases have 2 components, F(1) - the catalytic core - and F(0) - the membrane proton channel. F(1) has five subunits: alpha(3), beta(3), gamma(1), delta(1), epsilon(1). F(0) has three main subunits: a(1), b(2) and c(10-14). The alpha and beta chains form an alternating ring which encloses part of the gamma chain. F(1) is attached to F(0) by a central stalk formed by the gamma and epsilon chains, while a peripheral stalk is formed by the delta and b chains.

Its subcellular location is the cell inner membrane. In terms of biological role, f(1)F(0) ATP synthase produces ATP from ADP in the presence of a proton or sodium gradient. F-type ATPases consist of two structural domains, F(1) containing the extramembraneous catalytic core and F(0) containing the membrane proton channel, linked together by a central stalk and a peripheral stalk. During catalysis, ATP synthesis in the catalytic domain of F(1) is coupled via a rotary mechanism of the central stalk subunits to proton translocation. Functionally, component of the F(0) channel, it forms part of the peripheral stalk, linking F(1) to F(0). The b'-subunit is a diverged and duplicated form of b found in plants and photosynthetic bacteria. The protein is ATP synthase subunit b 2 (atpF2) of Cereibacter sphaeroides (strain ATCC 17025 / ATH 2.4.3) (Rhodobacter sphaeroides).